Here is a 770-residue protein sequence, read N- to C-terminus: Shutoff protein (770 aa).

Disordered stretches follow at residues 1 to 20 (MEEDLKLQPDSETLTTPNSE) and 30 to 49 (EEENEQVEQDPGYVTPPEDG). Residues 10–19 (DSETLTTPNS) are compositionally biased toward polar residues. The segment at 248 to 312 (VMDQVLIKRA…AVLVTVELEC (65 aa)) is binding to host EIF4G. Residues 315–433 (RFFANPQTLR…ELWTSFDERT (119 aa)) form the RRM domain. Residues tyrosine 332 and tyrosine 647 each carry the phosphotyrosine; by host modification. Positions 661–770 (LSAAASCRSQ…TATMFTESQP (110 aa)) are disordered. Residues 726 to 739 (GGPRGRGGRNHRQR) are compositionally biased toward basic residues. Residues 742 to 755 (TIFQKTRSEPTSEN) are compositionally biased toward polar residues.

It belongs to the adenoviridae shutoff protein family. In terms of assembly, monomer. Interacts with hexon protein; this interaction allows chaperoning and trimerization of hexon proteins. Interacts (via N-terminus) with host initiation factor EIF4G (via C-terminus). Interacts (via RRM domain) with viral mRNAs that contain the tripartite leader; this interaction allows ribosome shunting and expression of viral late mRNAs. In terms of processing, might be cleaved by the viral protease. Post-translationally, phosphorylated. Tyrosine phosphorylation enhances preferential binding to tripartite leader mRNAs and allows ribosome shunting. Methylated. Asymmetric dimethylation by host PRMT1 of the Arg/Gly-rich region may regulate shutoff protein binding to hexon and promote the capsid assembly in the nucleus.

Its subcellular location is the host cytoplasm. In terms of biological role, protein that inhibits host translation while promoting late viral translation by ribosome shunting. Blocks host cap-dependent translation by binding to eIF4G, displacing MKNK1 from cap initiation complexes and preventing EIF4E phosphorylation. Binds to the tripartite leader sequence of viral late mRNAs and recruits host eIF4G, PABPC1/poly-A binding protein and 40S ribosomes subunits on viral mRNAs, allowing ribosome shunting and efficient translation of late viral mRNAs even though conventional translation via ribosome scanning from the cap has been shut off in the host cell. During assembly, acts as a chaperone protein that helps hexon proteins assembly into trimers. The sequence is that of Shutoff protein from Human adenovirus F serotype 40 (HAdV-40).